Consider the following 771-residue polypeptide: Glucocorticoid receptor (771 aa).

Positions 1–415 (MDLKESVTSS…STTTGPPPKL (415 aa)) are modulating. Thr-8 carries the post-translational modification Phosphothreonine. Residue Arg-22 is modified to Omega-N-methylarginine. A phosphoserine mark is found at Ser-44, Ser-133, Ser-199, Ser-207, and Ser-222. Residues 129 to 172 (SRSTSVPENPKNSASAVSGTPTEEFPKTQSDLSSEQENLKSQAG) show a composition bias toward polar residues. Positions 129–184 (SRSTSVPENPKNSASAVSGTPTEEFPKTQSDLSSEQENLKSQAGTNGGNVKFPPDQ) are disordered. Lys-254 is covalently cross-linked (Glycyl lysine isopeptide (Lys-Gly) (interchain with G-Cter in SUMO2)). Residue Ser-263 is modified to Phosphoserine. Glycyl lysine isopeptide (Lys-Gly) (interchain with G-Cter in SUMO); alternate cross-links involve residues Lys-273 and Lys-289. Glycyl lysine isopeptide (Lys-Gly) (interchain with G-Cter in SUMO2); alternate cross-links involve residues Lys-273 and Lys-289. Residues Ser-303 and Ser-400 each carry the phosphoserine modification. Positions 390-411 (SSPGLRPDVSSPPSSSSTTTGP) are disordered. Low complexity predominate over residues 400-409 (SPPSSSSTTT). Lys-414 is covalently cross-linked (Glycyl lysine isopeptide (Lys-Gly) (interchain with G-Cter in ubiquitin)). 2 NR C4-type zinc fingers span residues 416-436 (CLVC…CGSC) and 452-476 (CAGR…YRKC). The segment at residues 416–481 (CLVCSDELSG…RYRKCLQAGM (66 aa)) is a DNA-binding region (nuclear receptor). 4 positions are modified to N6-acetyllysine: Lys-475, Lys-487, Lys-489, and Lys-490. Positions 480-771 (GMNLQARKTK…DIKKLLFHQK (292 aa)) are interaction with CLOCK. Positions 482–517 (NLQARKTKKKIKGIQQATTGVSQNTSENPNKTIVPA) are hinge. The NR LBD domain occupies 518-752 (TLPQLTPTLV…FPEMLAEIIT (235 aa)). The segment at 526 to 691 (LVSLLEVIEP…EIRMTYIKEL (166 aa)) is interaction with CRY1. Lys-697 is covalently cross-linked (Glycyl lysine isopeptide (Lys-Gly) (interchain with G-Cter in SUMO)).

This sequence belongs to the nuclear hormone receptor family. NR3 subfamily. In terms of assembly, heteromultimeric cytoplasmic complex with HSP90AA1, HSPA1A/HSPA1B, and FKBP5 or another immunophilin such as PPID, STIP1, or the immunophilin homolog PPP5C. Upon ligand binding FKBP5 dissociates from the complex and FKBP4 takes its place, thereby linking the complex to dynein and mediating transport to the nucleus, where the complex dissociates. Probably forms a complex composed of chaperones HSP90 and HSP70, co-chaperones CDC37, PPP5C, TSC1 and client protein TSC2, CDK4, AKT, RAF1 and NR3C1; this complex does not contain co-chaperones STIP1/HOP and PTGES3/p23. Directly interacts with UNC45A. Binds to DNA as a homodimer, and as heterodimer with NR3C2 or the retinoid X receptor. Binds STAT5A and STAT5B homodimers and heterodimers. Interacts with NRIP1, POU2F1, POU2F2 and TRIM28. Interacts with several coactivator complexes, including the SMARCA4 complex, CREBBP/EP300, TADA2L (Ada complex) and p160 coactivators such as NCOA2 and NCOA6. Interaction with BAG1 inhibits transactivation. Interacts with HEXIM1 and TGFB1I1. Interacts with NCOA1. Interacts with NCOA3, SMARCA4, SMARCC1, SMARCD1, and SMARCE1. Interacts with CLOCK, CRY1 and CRY2 in a ligand-dependent fashion. Interacts with CIART. Interacts with RWDD3. Interacts with UBE2I/UBC9 and this interaction is enhanced in the presence of RWDD3. Interacts with GRIP1. Interacts with NR4A3 (via nuclear receptor DNA-binding domain), represses transcription activity of NR4A3 on the POMC promoter Nur response element (NurRE). Directly interacts with PNRC2 to attract and form a complex with UPF1 and DCP1A; the interaction leads to rapid mRNA degradation. Interacts with GSK3B. Interacts with FNIP1 and FNIP2. Interacts (via C-terminus) with HNRNPU (via C-terminus). Interacts with MCM3AP. Interacts (via domain NR LBD) with HSP90AA1 and HSP90AB1. In the absence of hormonal ligand, interacts with TACC1. Interacts (via NR LBD domain) with ZNF764 (via KRAB domain); the interaction regulates transcription factor activity of NR3C1 by directing its actions toward certain biologic pathways. Acetylation by CLOCK reduces its binding to glucocorticoid response elements and its transcriptional activity. Post-translationally, increased proteasome-mediated degradation in response to glucocorticoids. In terms of processing, phosphorylated in the absence of hormone; becomes hyperphosphorylated in the presence of glucocorticoid. The Ser-199, Ser-222 and Ser-400-phosphorylated forms are mainly cytoplasmic, and the Ser-207-phosphorylated form is nuclear. Phosphorylation at Ser-207 increases transcriptional activity. Phosphorylation at Ser-199, Ser-222 and Ser-400 decreases signaling capacity. Phosphorylation at Ser-400 may protect from glucocorticoid-induced apoptosis. Phosphorylation at Ser-199 and Ser-207 is not required in regulation of chromosome segregation. May be dephosphorylated by PPP5C, attenuates NR3C1 action. Ubiquitinated by UBR5, leading to its degradation: UBR5 specifically recognizes and binds ligand-bound NR3C1 when it is not associated with coactivators (NCOAs). In presence of NCOAs, the UBR5-degron is not accessible, preventing its ubiquitination and degradation. Post-translationally, sumoylation at Lys-273 and Lys-289 negatively regulates its transcriptional activity. Sumoylation at Lys-697 positively regulates its transcriptional activity in the presence of RWDD3. Sumoylation at Lys-273 and Lys-289 is dispensable whereas sumoylation at Lys-697 is critical for the stimulatory effect of RWDD3 on its transcriptional activity. Heat shock increases sumoylation in a RWDD3-dependent manner.

Its subcellular location is the cytoplasm. It localises to the nucleus. It is found in the mitochondrion. The protein resides in the cytoskeleton. The protein localises to the spindle. Its subcellular location is the microtubule organizing center. It localises to the centrosome. It is found in the chromosome. The protein resides in the nucleoplasm. Functionally, receptor for glucocorticoids (GC). Has a dual mode of action: as a transcription factor that binds to glucocorticoid response elements (GRE), both for nuclear and mitochondrial DNA, and as a modulator of other transcription factors. Affects inflammatory responses, cellular proliferation and differentiation in target tissues. Involved in chromatin remodeling. Plays a role in rapid mRNA degradation by binding to the 5' UTR of target mRNAs and interacting with PNRC2 in a ligand-dependent manner which recruits the RNA helicase UPF1 and the mRNA-decapping enzyme DCP1A, leading to RNA decay. Could act as a coactivator for STAT5-dependent transcription upon growth hormone (GH) stimulation and could reveal an essential role of hepatic GR in the control of body growth. Mediates glucocorticoid-induced apoptosis. Promotes accurate chromosome segregation during mitosis. May act as a tumor suppressor. May play a negative role in adipogenesis through the regulation of lipolytic and antilipogenic gene expression. The sequence is that of Glucocorticoid receptor (NR3C1) from Cavia porcellus (Guinea pig).